Here is a 131-residue protein sequence, read N- to C-terminus: Small ribosomal subunit protein uS8 (131 aa).

Belongs to the universal ribosomal protein uS8 family. Part of the 30S ribosomal subunit. Contacts proteins S5 and S12.

In terms of biological role, one of the primary rRNA binding proteins, it binds directly to 16S rRNA central domain where it helps coordinate assembly of the platform of the 30S subunit. The sequence is that of Small ribosomal subunit protein uS8 from Prosthecochloris aestuarii (strain DSM 271 / SK 413).